Reading from the N-terminus, the 146-residue chain is Hemoglobin subunit beta (146 aa).

Residues H2–H146 enclose the Globin domain. Residues H63 and H92 each coordinate heme b.

It belongs to the globin family. In terms of assembly, heterotetramer of two alpha chains and two beta chains. In terms of tissue distribution, red blood cells.

Involved in oxygen transport from the lung to the various peripheral tissues. This Aquila chrysaetos (Golden eagle) protein is Hemoglobin subunit beta (HBB).